Here is a 495-residue protein sequence, read N- to C-terminus: ATP synthase subunit beta, chloroplastic (495 aa).

172 to 179 serves as a coordination point for ATP; sequence GGAGVGKT.

The protein belongs to the ATPase alpha/beta chains family. In terms of assembly, F-type ATPases have 2 components, CF(1) - the catalytic core - and CF(0) - the membrane proton channel. CF(1) has five subunits: alpha(3), beta(3), gamma(1), delta(1), epsilon(1). CF(0) has four main subunits: a(1), b(1), b'(1) and c(9-12).

Its subcellular location is the plastid. It localises to the chloroplast thylakoid membrane. The catalysed reaction is ATP + H2O + 4 H(+)(in) = ADP + phosphate + 5 H(+)(out). Its function is as follows. Produces ATP from ADP in the presence of a proton gradient across the membrane. The catalytic sites are hosted primarily by the beta subunits. The sequence is that of ATP synthase subunit beta, chloroplastic from Hyacinthus orientalis (Common hyacinth).